The primary structure comprises 449 residues: Glucose-6-phosphate isomerase (449 aa).

The active-site Proton donor is E291. Active-site residues include H312 and K426.

Belongs to the GPI family.

It localises to the cytoplasm. It catalyses the reaction alpha-D-glucose 6-phosphate = beta-D-fructose 6-phosphate. It participates in carbohydrate biosynthesis; gluconeogenesis. Its pathway is carbohydrate degradation; glycolysis; D-glyceraldehyde 3-phosphate and glycerone phosphate from D-glucose: step 2/4. Functionally, catalyzes the reversible isomerization of glucose-6-phosphate to fructose-6-phosphate. The protein is Glucose-6-phosphate isomerase of Clostridium botulinum (strain Eklund 17B / Type B).